We begin with the raw amino-acid sequence, 171 residues long: uncharacterized protein (171 aa).

A signal peptide spans 1–18 (MRYSKLTMLIPCALLLSA). Cys-19 is lipidated: N-palmitoyl cysteine. Cys-19 is lipidated: S-diacylglycerol cysteine.

Its subcellular location is the cell membrane. This is an uncharacterized protein from Escherichia coli (strain K12).